Here is a 388-residue protein sequence, read N- to C-terminus: Probable Na(+)/H(+) antiporter 3 (388 aa).

12 helical membrane passes run 2–22 (ESYYYVFFIILSIIFIVPNLL), 27–47 (IPAITSIMIAGIIIGPYGLNI), 53–73 (TLKILADFGAIMLMFLAGLEV), 81–101 (EFKNSLILSLFSLLIPGVGGY), 102–122 (LIGQYLGLGFIGSLLYAVIFA), 146–166 (IILSATIIVDLFTLLLLSVVI), 175–195 (VGTFLLETVLYIGVLLLAIPS), 215–235 (VLFIIFIAIIVGEVIGIHPIV), 263–283 (AIGYGFFIPIFFLVLGMETNI), 294–314 (LLLITLISAVALKFISGFIAL), 325–345 (TIGGLLTVPKISASLVAASIG), and 354–374 (EIFVTIVALSVITATITPIVV).

The protein belongs to the monovalent cation:proton antiporter 1 (CPA1) transporter (TC 2.A.36) family.

Its subcellular location is the cell membrane. Functionally, this is probably a Na(+)/H(+) antiporter. The sequence is that of Probable Na(+)/H(+) antiporter 3 from Methanocaldococcus jannaschii (strain ATCC 43067 / DSM 2661 / JAL-1 / JCM 10045 / NBRC 100440) (Methanococcus jannaschii).